Consider the following 252-residue polypeptide: MERVLIVNADDFGLSKGQNYGIIEACRNGVVTSTTALVNGAAIDHAAQLSRSTPELAVGMHFVLTLGEPLSAMPGLTREGRLGKWIWQQAEEGRLPLEEIAHELACQYRRFVDLFGHEPTHLDSHHHVHMIAPIYPIVAAFAREKGIALRIDRQVAAQSGLDQQAARSSAGFSSEFYGEAVSEELFLQTLDASIARGERSLEVMCHPAFVDQTIMGSAYCYPRLGELDVLTSAALKAAVADRGYRLGTYRDV.

The Mg(2+) site is built by His61 and His125.

It belongs to the YdjC deacetylase family. ChbG subfamily. Homodimer. It depends on Mg(2+) as a cofactor.

It is found in the cytoplasm. It catalyses the reaction N,N'-diacetylchitobiose + H2O = N-acetyl-beta-D-glucosaminyl-(1-&gt;4)-D-glucosamine + acetate. It carries out the reaction diacetylchitobiose-6'-phosphate + H2O = N'-monoacetylchitobiose-6'-phosphate + acetate. It functions in the pathway glycan degradation; chitin degradation. Functionally, involved in the degradation of chitin. ChbG is essential for growth on the acetylated chitooligosaccharides chitobiose and chitotriose but is dispensable for growth on cellobiose and chitosan dimer, the deacetylated form of chitobiose. Deacetylation of chitobiose-6-P and chitotriose-6-P is necessary for both the activation of the chb promoter by the regulatory protein ChbR and the hydrolysis of phosphorylated beta-glucosides by the phospho-beta-glucosidase ChbF. Catalyzes the removal of only one acetyl group from chitobiose-6-P to yield monoacetylchitobiose-6-P, the inducer of ChbR and the substrate of ChbF. The sequence is that of Chitooligosaccharide deacetylase from Klebsiella pneumoniae (strain 342).